Consider the following 98-residue polypeptide: Integration host factor subunit beta (98 aa).

The interval 59–98 is disordered; that stretch reads RTGRNPKTGESVTLPGKYVPHFKPGKEMRDRVNESIQSEG. Residues 82–91 are compositionally biased toward basic and acidic residues; the sequence is PGKEMRDRVN.

This sequence belongs to the bacterial histone-like protein family. Heterodimer of an alpha and a beta chain.

In terms of biological role, this protein is one of the two subunits of integration host factor, a specific DNA-binding protein that functions in genetic recombination as well as in transcriptional and translational control. This is Integration host factor subunit beta from Saccharophagus degradans (strain 2-40 / ATCC 43961 / DSM 17024).